Reading from the N-terminus, the 229-residue chain is uncharacterized protein (229 aa).

It to T.pallidum TP_0315, TP_0618 and TP_0619.

This is an uncharacterized protein from Treponema pallidum (strain Nichols).